Consider the following 415-residue polypeptide: Fructose-like permease IIC component (415 aa).

At 1–46 the chain is on the cytoplasmic side; that stretch reads MAIKKRSATVVHGASGAAAAVKNPQASKSSFWGELPQHVMSGISRM. Residues 35 to 415 form the PTS EIIC type-2 domain; sequence LPQHVMSGIS…RKGKLLIESL (381 aa). A helical transmembrane segment spans residues 47 to 67; the sequence is VPTLIMGGVILAFSQLIAYSW. Residues 68-101 are Periplasmic-facing; that stretch reads LKIPADIGIMDALNSGKFSGFDLSLLKFAWLSQS. Residues 102–122 form a helical membrane-spanning segment; it reads FGGVLFGFAIPMFAAFVANSI. At 123-126 the chain is on the cytoplasmic side; it reads GGKL. A helical transmembrane segment spans residues 127–147; it reads AFPAGFIGGLMSTQPTQLLNF. The Periplasmic portion of the chain corresponds to 148-157; it reads DPSTMQWATS. A helical transmembrane segment spans residues 158–178; sequence SPVPSTFIGALIISIVAGYLV. Topologically, residues 179-197 are cytoplasmic; that stretch reads KWMNQKIQLPDFLLAFKTT. The chain crosses the membrane as a helical span at residues 198-218; that stretch reads FLLPILSAIFVMLAMYYVITP. At 219-237 the chain is on the periplasmic side; it reads FGGWINGGIRTVLTAAGEK. The helical transmembrane segment at 238–258 threads the bilayer; that stretch reads GALMYAMGIAAATAIDLGGPI. Topologically, residues 259 to 276 are cytoplasmic; that stretch reads NKAAGFVAFSFTTDHVLP. Residues 277–297 traverse the membrane as a helical segment; that stretch reads VTARSIAIVIPPIGLGLATII. Residues 298–318 are Periplasmic-facing; that stretch reads DRRLTGKRLFNAQLYPQGKTA. A helical transmembrane segment spans residues 319-339; the sequence is MFLAFMGISEGAIPFALESPI. Over 340 to 341 the chain is Cytoplasmic; the sequence is TA. Residues 342 to 362 form a helical membrane-spanning segment; it reads IPSYMVGAIVGSTAAVWLGAV. Residues 363 to 378 lie on the Periplasmic side of the membrane; that stretch reads QWFPESAIWAWPLVTN. The chain crosses the membrane as a helical span at residues 379–399; that stretch reads LGVYMAGIALGAIITALMVVF. The Cytoplasmic portion of the chain corresponds to 400-415; that stretch reads LRLMMFRKGKLLIESL.

Its subcellular location is the cell inner membrane. The phosphoenolpyruvate-dependent sugar phosphotransferase system (PTS), a major carbohydrate active -transport system, catalyzes the phosphorylation of incoming sugar substrates concomitant with their translocation across the cell membrane. This Escherichia coli O6:H1 (strain CFT073 / ATCC 700928 / UPEC) protein is Fructose-like permease IIC component (fryC).